We begin with the raw amino-acid sequence, 287 residues long: Cell wall protein PIR5 (287 aa).

The first 21 residues, 1-21 (MHYKKAFLASLLSSIALTAYA), serve as a signal peptide directing secretion. Positions 22 to 62 (PPEPWATLTPSSKMDGGTTEYRTSFGLAVIPFTVTESKVKR) are excised as a propeptide. PIR1/2/3 repeat units lie at residues 62-80 (RNVI…TQKL), 81-99 (PHPV…TQKV), 104-122 (SHIV…TAKN), and 144-162 (ATAV…ISSA).

This sequence belongs to the PIR protein family. In terms of processing, covalently linked to beta-1,3-glucan of the inner cell wall layer via an alkali-sensitive ester linkage between the gamma-carboxyl group of glutamic acids, arising from specific glutamines within the PIR1/2/3 repeats, and hydroxyl groups of glucoses of beta-1,3-glucan chains.

It localises to the secreted. The protein localises to the cell wall. Functionally, component of the outer cell wall layer. May be involved in meiosis and sporulation. This is Cell wall protein PIR5 (PIR5) from Saccharomyces cerevisiae (strain YJM789) (Baker's yeast).